The chain runs to 470 residues: Properdin (470 aa).

A signal peptide spans 1–26; the sequence is MTAPVQVPQSLLLLLMLLLTLPATGS. 7 consecutive TSP type-1 domains span residues 27 to 75, 76 to 133, 135 to 190, 192 to 254, 256 to 312, 314 to 376, and 380 to 463; these read DPVL…QACR, SPRW…QCCP, MGGW…QVCP, HGAW…PPCP, AGGW…VPCP, DGEW…QNCI, and KGSW…PACK. 3 disulfides stabilise this stretch: C31-C55, C42-C71, and C56-C74. 2 C-linked (Man) tryptophan glycosylation sites follow: W82 and W85. 7 disulfides stabilise this stretch: C88–C126, C92–C132, C103–C110, C131–C169, C147–C183, C151–C189, and C162–C173. C-linked (Man) tryptophan glycosylation is found at W138, W141, and W144. O-linked (Fuc...) threonine glycosylation occurs at T150. W195, W198, and W201 each carry a C-linked (Man) tryptophan glycan. 3 disulfides stabilise this stretch: C204/C247, C208/C253, and C223/C237. O-linked (Fuc...) serine glycosylation is present at S207. C-linked (Man) tryptophan glycosylation is found at W259 and W262. Cystine bridges form between C268–C305, C272–C311, and C283–C295. T271 is a glycosylation site (O-linked (Fuc...) threonine). C-linked (Man) tryptophan glycosylation is found at W320 and W323. 3 disulfide bridges follow: C326-C369, C336-C375, and C349-C359. The interaction with Complement C3 beta chain stretch occupies residues 350-358; sequence KGRKFNGQR. 3 C-linked (Man) tryptophan glycosylation sites follow: W383, W386, and W389. Disulfide bonds link C392–C456, C396–C462, and C408–C440. N429 is a glycosylation site (N-linked (GlcNAc...) asparagine).

As to quaternary structure, in plasma, properdin exists as dimers, trimers or tetramers in the relative proportions of 26:54:20. Interacts with the pro-C3-convertase enzyme complex (C3b-Bb) comprised of Complement C3 beta chain (C3b) and the Complement factor B Bb fragment (Bb), where it binds (via its TSP type-1 5 domain) with C3b and Bb. This interaction stabilizes the complex and allows it to become the active C3-convertase enzyme complex (C3b-Bb-FP). Interacts with C3b. Interacts with CFB.

The protein resides in the secreted. Functionally, a positive regulator of the alternate pathway of complement. It binds to and stabilizes the C3- and C5-convertase enzyme complexes. Inhibits CFI-CFH mediated degradation of Inhibits CFI-CFH mediated degradation of Complement C3 beta chain (C3b). The sequence is that of Properdin (CFP) from Cavia porcellus (Guinea pig).